The primary structure comprises 199 residues: Dephospho-CoA kinase (199 aa).

A DPCK domain is found at 4 to 199 (VLGITGGIAT…KWLEEQIGKK (196 aa)). Residue 12–17 (ATGKST) coordinates ATP.

This sequence belongs to the CoaE family.

The protein resides in the cytoplasm. It carries out the reaction 3'-dephospho-CoA + ATP = ADP + CoA + H(+). The protein operates within cofactor biosynthesis; coenzyme A biosynthesis; CoA from (R)-pantothenate: step 5/5. Functionally, catalyzes the phosphorylation of the 3'-hydroxyl group of dephosphocoenzyme A to form coenzyme A. The sequence is that of Dephospho-CoA kinase from Enterococcus faecalis (strain ATCC 700802 / V583).